A 210-amino-acid chain; its full sequence is Orotate phosphoribosyltransferase (210 aa).

Residues R94, K98, H100, and 120–128 (EDLISTGGS) contribute to the 5-phospho-alpha-D-ribose 1-diphosphate site. Position 124 (S124) interacts with orotate.

It belongs to the purine/pyrimidine phosphoribosyltransferase family. PyrE subfamily. As to quaternary structure, homodimer. It depends on Mg(2+) as a cofactor.

The enzyme catalyses orotidine 5'-phosphate + diphosphate = orotate + 5-phospho-alpha-D-ribose 1-diphosphate. Its pathway is pyrimidine metabolism; UMP biosynthesis via de novo pathway; UMP from orotate: step 1/2. Its function is as follows. Catalyzes the transfer of a ribosyl phosphate group from 5-phosphoribose 1-diphosphate to orotate, leading to the formation of orotidine monophosphate (OMP). The chain is Orotate phosphoribosyltransferase from Bacillus mycoides (strain KBAB4) (Bacillus weihenstephanensis).